Consider the following 264-residue polypeptide: 5'-nucleotidase SurE (264 aa).

Residues aspartate 9, aspartate 10, serine 40, and asparagine 95 each contribute to the a divalent metal cation site.

It belongs to the SurE nucleotidase family. A divalent metal cation is required as a cofactor.

The protein resides in the cytoplasm. It catalyses the reaction a ribonucleoside 5'-phosphate + H2O = a ribonucleoside + phosphate. Functionally, nucleotidase that shows phosphatase activity on nucleoside 5'-monophosphates. In Helicobacter hepaticus (strain ATCC 51449 / 3B1), this protein is 5'-nucleotidase SurE.